The primary structure comprises 113 residues: Photosystem II reaction center Psb28 protein (113 aa).

It belongs to the Psb28 family. In terms of assembly, part of the photosystem II complex.

The protein localises to the cellular thylakoid membrane. The polypeptide is Photosystem II reaction center Psb28 protein (Trichodesmium erythraeum (strain IMS101)).